We begin with the raw amino-acid sequence, 357 residues long: Uroporphyrinogen decarboxylase (357 aa).

Substrate-binding positions include 34 to 38 (RQAGR), aspartate 83, tyrosine 158, serine 213, and histidine 336.

This sequence belongs to the uroporphyrinogen decarboxylase family. Homodimer.

Its subcellular location is the cytoplasm. The catalysed reaction is uroporphyrinogen III + 4 H(+) = coproporphyrinogen III + 4 CO2. It functions in the pathway porphyrin-containing compound metabolism; protoporphyrin-IX biosynthesis; coproporphyrinogen-III from 5-aminolevulinate: step 4/4. Its function is as follows. Catalyzes the decarboxylation of four acetate groups of uroporphyrinogen-III to yield coproporphyrinogen-III. The protein is Uroporphyrinogen decarboxylase of Mycolicibacterium paratuberculosis (strain ATCC BAA-968 / K-10) (Mycobacterium paratuberculosis).